A 115-amino-acid polypeptide reads, in one-letter code: U3-lycotoxin-Ls1k (115 aa).

The signal sequence occupies residues 1–20 (MKFVLLFGVLLVTLFSYSSA). The propeptide occupies 21–44 (EMFDDFDQADEDELLSLIEKEEAR). 4 disulfides stabilise this stretch: C48/C63, C55/C72, C62/C87, and C74/C85.

It belongs to the neurotoxin 19 (CSTX) family. 01 subfamily. Expressed by the venom gland.

The protein localises to the secreted. This Lycosa singoriensis (Wolf spider) protein is U3-lycotoxin-Ls1k.